Consider the following 1054-residue polypeptide: Probable sucrose-phosphate synthase 1 (1054 aa).

A compositionally biased stretch (basic and acidic residues) spans 104–115 (RLERERGRREAV). Disordered stretches follow at residues 104 to 125 (RLER…LSEG), 674 to 693 (LRNE…SDSL), and 708 to 727 (DGDK…DDRA).

The protein belongs to the glycosyltransferase 1 family. Homodimer or homotetramer.

The catalysed reaction is beta-D-fructose 6-phosphate + UDP-alpha-D-glucose = sucrose 6(F)-phosphate + UDP + H(+). It participates in glycan biosynthesis; sucrose biosynthesis; sucrose from D-fructose 6-phosphate and UDP-alpha-D-glucose: step 1/2. Activity is regulated by phosphorylation and moderated by concentration of metabolites and light. Its function is as follows. Plays a role in photosynthetic sucrose synthesis by catalyzing the rate-limiting step of sucrose biosynthesis from UDP-glucose and fructose- 6-phosphate. Involved in the regulation of carbon partitioning in the leaves of plants. May regulate the synthesis of sucrose and therefore play a major role as a limiting factor in the export of photoassimilates out of the leaf. Plays a role for sucrose availability that is essential for plant growth and fiber elongation. In Craterostigma plantagineum (Blue gem), this protein is Probable sucrose-phosphate synthase 1 (SPS1).